The primary structure comprises 533 residues: 2,3-bisphosphoglycerate-independent phosphoglycerate mutase (533 aa).

2 residues coordinate Mn(2+): Asp-15 and Ser-65. The active-site Phosphoserine intermediate is the Ser-65. Substrate is bound by residues His-126, 156–157 (RD), Arg-188, Arg-194, 258–261 (RPDR), and Lys-331. Residues Asp-398, His-402, Asp-439, His-440, and His-457 each coordinate Mn(2+).

It belongs to the BPG-independent phosphoglycerate mutase family. As to quaternary structure, monomer. It depends on Mn(2+) as a cofactor.

The catalysed reaction is (2R)-2-phosphoglycerate = (2R)-3-phosphoglycerate. Its pathway is carbohydrate degradation; glycolysis; pyruvate from D-glyceraldehyde 3-phosphate: step 3/5. Catalyzes the interconversion of 2-phosphoglycerate and 3-phosphoglycerate. The protein is 2,3-bisphosphoglycerate-independent phosphoglycerate mutase of Nostoc sp. (strain PCC 7120 / SAG 25.82 / UTEX 2576).